Consider the following 864-residue polypeptide: DNA mismatch repair protein MutS (864 aa).

623–630 (GPNMGGKS) contacts ATP.

This sequence belongs to the DNA mismatch repair MutS family.

In terms of biological role, this protein is involved in the repair of mismatches in DNA. It is possible that it carries out the mismatch recognition step. This protein has a weak ATPase activity. This Polaromonas sp. (strain JS666 / ATCC BAA-500) protein is DNA mismatch repair protein MutS.